The sequence spans 73 residues: Antimicrobial peptide 6 (73 aa).

Residues 1–22 (MQIKHLITLFFLVLIVADQCSA) form the signal peptide. A propeptide spanning residues 45–73 (EISTQIDQYRNLQKREAELEELLDRLPMY) is cleaved from the precursor.

It belongs to the non-disulfide-bridged peptide (NDBP) superfamily. Short antimicrobial peptide (group 4) family. In terms of tissue distribution, expressed by the venom gland.

It is found in the secreted. In terms of biological role, antibacterial peptide. The polypeptide is Antimicrobial peptide 6 (Tityus costatus (Brazilian scorpion)).